A 1384-amino-acid polypeptide reads, in one-letter code: ATP-dependent RNA helicase TDRD9 (1384 aa).

The disordered stretch occupies residues E35–V60. The segment covering A36 to E46 has biased composition (basic and acidic residues). The Helicase ATP-binding domain maps to I144–N310. G157 to S164 is a binding site for ATP. The DEAH box motif lies at D256–H259. A Helicase C-terminal domain is found at S379–G546. A Tudor domain is found at H946–L1006.

This sequence belongs to the DEAD box helicase family. DEAH subfamily. As to quaternary structure, interacts with piRNA-associated proteins PIWIL1 and PIWIL4.

Its subcellular location is the cytoplasm. It localises to the nucleus. It carries out the reaction ATP + H2O = ADP + phosphate + H(+). Its function is as follows. ATP-binding RNA helicase which plays a central role during spermatogenesis by repressing transposable elements and preventing their mobilization, which is essential for the germline integrity. Acts via the piRNA metabolic process, which mediates the repression of transposable elements during meiosis by forming complexes composed of piRNAs and Piwi proteins and governs the methylation and subsequent repression of transposons. Acts downstream of piRNA biogenesis: exclusively required for transposon silencing in the nucleus, suggesting that it acts as a nuclear effector in the nucleus together with PIWIL4. The protein is ATP-dependent RNA helicase TDRD9 of Rattus norvegicus (Rat).